The sequence spans 508 residues: Light-independent protochlorophyllide reductase subunit B (508 aa).

Asp36 contributes to the [4Fe-4S] cluster binding site. The active-site Proton donor is Asp294. 429 to 430 is a substrate binding site; that stretch reads GM.

The protein belongs to the ChlB/BchB/BchZ family. In terms of assembly, protochlorophyllide reductase is composed of three subunits; ChlL, ChlN and ChlB. Forms a heterotetramer of two ChlB and two ChlN subunits. It depends on [4Fe-4S] cluster as a cofactor.

It carries out the reaction chlorophyllide a + oxidized 2[4Fe-4S]-[ferredoxin] + 2 ADP + 2 phosphate = protochlorophyllide a + reduced 2[4Fe-4S]-[ferredoxin] + 2 ATP + 2 H2O. It functions in the pathway porphyrin-containing compound metabolism; chlorophyll biosynthesis (light-independent). Its function is as follows. Component of the dark-operative protochlorophyllide reductase (DPOR) that uses Mg-ATP and reduced ferredoxin to reduce ring D of protochlorophyllide (Pchlide) to form chlorophyllide a (Chlide). This reaction is light-independent. The NB-protein (ChlN-ChlB) is the catalytic component of the complex. The sequence is that of Light-independent protochlorophyllide reductase subunit B from Crocosphaera subtropica (strain ATCC 51142 / BH68) (Cyanothece sp. (strain ATCC 51142)).